Reading from the N-terminus, the 710-residue chain is Polyribonucleotide nucleotidyltransferase (710 aa).

Positions 491 and 497 each coordinate Mg(2+). In terms of domain architecture, KH spans 558–618; that stretch reads PRIYKIQVKP…SAAQKAIEII (61 aa). In terms of domain architecture, S1 motif spans 628-696; the sequence is GRIYMGKVTR…ELGRVRLSRK (69 aa).

Belongs to the polyribonucleotide nucleotidyltransferase family. Mg(2+) is required as a cofactor.

The protein resides in the cytoplasm. It catalyses the reaction RNA(n+1) + phosphate = RNA(n) + a ribonucleoside 5'-diphosphate. Functionally, involved in mRNA degradation. Catalyzes the phosphorolysis of single-stranded polyribonucleotides processively in the 3'- to 5'-direction. The protein is Polyribonucleotide nucleotidyltransferase of Thermodesulfovibrio yellowstonii (strain ATCC 51303 / DSM 11347 / YP87).